A 252-amino-acid chain; its full sequence is Putative hydro-lyase OB3382 (252 aa).

It belongs to the D-glutamate cyclase family.

The sequence is that of Putative hydro-lyase OB3382 from Oceanobacillus iheyensis (strain DSM 14371 / CIP 107618 / JCM 11309 / KCTC 3954 / HTE831).